An 847-amino-acid polypeptide reads, in one-letter code: Endo-beta-N-acetylglucosaminidase EndoSd (847 aa).

The first 36 residues, 1 to 36 (MDKRLLVKRTLGCVCAATLMGAILATHHDSLISVKA), serve as a signal peptide directing secretion. The 313-residue stretch at 65–377 (PLYAGYFRTW…HPVVDNISHT (313 aa)) folds into the GH18 domain. H107 is an a glycoprotein binding site. Catalysis depends on E186, which acts as the Proton donor. The a glycoprotein site is built by E188, Q250, Y252, E288, E289, N295, and Y339. LRR repeat units lie at residues 423 to 446 (LERYNKTLVLTVDKIHSLKGLEKL), 447 to 470 (SHLQKLELCQLSNVKEVTPDILPE), 483 to 506 (MTGLEKLNLRGLNRQTLDGIDVNG), and 507 to 530 (LTHLTSFDISHNSLDLSEKSADRK). Residues 683–836 (MENLAKGAKV…YTELQILGQR (154 aa)) are carbohydrate-binding module (CBM). Ca(2+) contacts are provided by K704, D707, and E829.

It belongs to the glycosyl hydrolase 18 family.

The protein resides in the secreted. The protein localises to the host extracellular space. The enzyme catalyses an N(4)-(oligosaccharide-(1-&gt;3)-[oligosaccharide-(1-&gt;6)]-beta-D-Man-(1-&gt;4)-beta-D-GlcNAc-(1-&gt;4)-alpha-D-GlcNAc)-L-asparaginyl-[protein] + H2O = an oligosaccharide-(1-&gt;3)-[oligosaccharide-(1-&gt;6)]-beta-D-Man-(1-&gt;4)-D-GlcNAc + N(4)-(N-acetyl-beta-D-glucosaminyl)-L-asparaginyl-[protein]. Endoglucosidase that acts as a host immune evasion factor by mediating hydrolysis of the N-linked glycan from the Fc region of host immunoglobulin-gamma (IgG) during infection. Specifically catalyzes the hydrolysis of the beta-1,4 linkage between the first two N-acetylglucosamine residues of the complex-type N-linked glycan located on 'Asn-297' of the Fc region of IgG antibodies (IGHG1, IGHG2, IGHG3 or IGHG4), thereby preventing interaction between IgGs and Fc receptors and ability to activate the complement pathway. Shows a specificity for biantennary complex type N-glycans; does neither cleave larger complex type glycans nor oligomannose and nor hybrid-type glycans. Specifically acts on IgGs; does not act on immunoglobulin alpha, beta, delta or mu. This chain is Endo-beta-N-acetylglucosaminidase EndoSd, found in Streptococcus dysgalactiae.